A 147-amino-acid chain; its full sequence is Transcriptional regulator MraZ (147 aa).

2 consecutive SpoVT-AbrB domains span residues 5–50 and 79–122; these read AVAL…PLTA and AQEE…SDAG.

This sequence belongs to the MraZ family. Forms oligomers.

Its subcellular location is the cytoplasm. The protein localises to the nucleoid. The chain is Transcriptional regulator MraZ from Azoarcus sp. (strain BH72).